A 417-amino-acid chain; its full sequence is Pygopus homolog 1 (417 aa).

Over residues 1–11 (MSAEQDKEPIA) the composition is skewed to basic and acidic residues. Disordered regions lie at residues 1–71 (MSAE…AANP), 175–265 (HFRQ…MEDP), and 284–318 (ENSRSGSAEATNNHANGTQNKPRQPRGAADLCTPD). Residues 18–27 (GDSGLDGLGG) are compositionally biased toward gly residues. Positions 35 to 41 (PDKKKRK) match the Nuclear localization signal motif. Polar residues-rich tracts occupy residues 180–221 (SAEN…TNHS), 240–256 (DFTQGATKTPNQNSSTH), and 284–305 (ENSRSGSAEATNNHANGTQNKP). A PHD-type zinc finger spans residues 338–396 (VYPCGICTNEVNDDQDAILCEASCQKWFHRICTGMTETAYGLLTAEASAVWGCDTCMAD). Positions 339-386 (YPCGICTNEVNDDQDAILCEASCQKWFHRICTGMTETAYGLLTAEASA) are interaction with H3K4me2. The interaction with BCL9 stretch occupies residues 371–389 (GMTETAYGLLTAEASAVWG).

As to quaternary structure, interacts with BCL9 via The PHD-type zinc finger motiv, and thereby becomes part of the nuclear beta-catenin/TCF complex. Found in a complex with BCL9L, CDC73, CTNNB1 and PYGO1. Interacts with histone H3 mono-, di- or tri-methylated at 'Lys4' (H3K4me1, H3K4me2, H3K4me3); the interaction is enhanced by the interaction with BCL9.

It localises to the nucleus. In terms of biological role, involved in signal transduction through the Wnt pathway. The polypeptide is Pygopus homolog 1 (Pygo1) (Mus musculus (Mouse)).